The following is a 92-amino-acid chain: Small ribosomal subunit protein uS19 (92 aa).

This sequence belongs to the universal ribosomal protein uS19 family.

In terms of biological role, protein S19 forms a complex with S13 that binds strongly to the 16S ribosomal RNA. The chain is Small ribosomal subunit protein uS19 from Pelobacter propionicus (strain DSM 2379 / NBRC 103807 / OttBd1).